Here is a 465-residue protein sequence, read N- to C-terminus: 28S rRNA (cytosine-C(5))-methyltransferase (465 aa).

Gly-2 is subject to N-acetylglycine. The residue at position 167 (Ser-167) is a Phosphoserine. S-adenosyl-L-methionine-binding positions include 234 to 240, Asp-258, Arg-263, and Asp-305; that span reads CAAPGNK. Cys-359 functions as the Nucleophile in the catalytic mechanism. Positions 430-465 are disordered; that stretch reads TPAPQTDAMDPEPLSQVPKRKRRRKAAVGASMQPST.

This sequence belongs to the class I-like SAM-binding methyltransferase superfamily. RsmB/NOP family. As to expression, in the hippocampus, specifically expressed in adult hippocampal NG2-positive oligodendrocyte precursor cells (at protein level).

The protein resides in the nucleus. It is found in the nucleolus. It catalyses the reaction a cytidine in 28S rRNA + S-adenosyl-L-methionine = a 5-methylcytidine in 28S rRNA + S-adenosyl-L-homocysteine + H(+). Functionally, S-adenosyl-L-methionine-dependent methyltransferase that specifically methylates the C(5) position of cytosine 3438 (m5C3438) in 28S rRNA. m5C3782 promotes protein translation without affecting ribosome biogenesis and fidelity. Required for corpus callosum and cerebral cortex development. The protein is 28S rRNA (cytosine-C(5))-methyltransferase of Mus musculus (Mouse).